The following is a 200-amino-acid chain: Probable molybdenum cofactor guanylyltransferase (200 aa).

GTP is bound by residues 9-11, K21, D69, and D100; that span reads LAG. Mg(2+) is bound at residue D100.

This sequence belongs to the MobA family. Mg(2+) is required as a cofactor.

Its subcellular location is the cytoplasm. It carries out the reaction Mo-molybdopterin + GTP + H(+) = Mo-molybdopterin guanine dinucleotide + diphosphate. Transfers a GMP moiety from GTP to Mo-molybdopterin (Mo-MPT) cofactor (Moco or molybdenum cofactor) to form Mo-molybdopterin guanine dinucleotide (Mo-MGD) cofactor. This is Probable molybdenum cofactor guanylyltransferase from Bacillus cereus (strain B4264).